Reading from the N-terminus, the 387-residue chain is S-adenosylmethionine synthase (387 aa).

Residue H19 participates in ATP binding. Mg(2+) is bound at residue D21. E47 contributes to the K(+) binding site. Q103 lines the L-methionine pocket. The segment at 103 to 113 (QSPDIAQGVEL) is flexible loop. ATP-binding positions include 167–169 (DMK), 233–234 (RF), D242, 248–249 (RK), A265, and K269. Residue D242 coordinates L-methionine. K273 is a binding site for L-methionine.

The protein belongs to the AdoMet synthase family. In terms of assembly, homotetramer; dimer of dimers. It depends on Mg(2+) as a cofactor. Requires K(+) as cofactor.

The protein localises to the cytoplasm. The catalysed reaction is L-methionine + ATP + H2O = S-adenosyl-L-methionine + phosphate + diphosphate. It participates in amino-acid biosynthesis; S-adenosyl-L-methionine biosynthesis; S-adenosyl-L-methionine from L-methionine: step 1/1. In terms of biological role, catalyzes the formation of S-adenosylmethionine (AdoMet) from methionine and ATP. The overall synthetic reaction is composed of two sequential steps, AdoMet formation and the subsequent tripolyphosphate hydrolysis which occurs prior to release of AdoMet from the enzyme. The polypeptide is S-adenosylmethionine synthase (Mycoplasma capricolum subsp. capricolum (strain California kid / ATCC 27343 / NCTC 10154)).